The following is a 145-amino-acid chain: Major pollen allergen Ole e 1 (145 aa).

Disulfide bonds link C19-C90, C22-C131, and C43-C78. A glycan (N-linked (GlcNAc...) (complex) asparagine; alternate) is linked at N111. Residue N111 is glycosylated (N-linked (GlcNAc...) (high mannose) asparagine; alternate).

The protein belongs to the Ole e I family. Post-translationally, N-glycosylated; contains high mannose (Man(7)-GlcNAc) and partially fucosylated complex glycans (GlcNAc-Man(3)-Xyl-GlcNAc). Complex glycans may contribute to the antigenicity. Exists both in a glycosylated and in a non-glycosylated form. Ole e 1 and Ole e 1.0103 are the only non-glycosylated isoallergens. A second potential glycosylation site exists at position 50 in cv. Bella de Espana and cv. Hojiblanca. Expressed in tapetum and pollen grains. Not detected in petals, roots or leaves.

The protein localises to the endoplasmic reticulum. The protein resides in the secreted. May be involved in recognition between pollen-stigma and pollen tube-style cells. The sequence is that of Major pollen allergen Ole e 1 from Olea europaea (Common olive).